We begin with the raw amino-acid sequence, 352 residues long: Holliday junction branch migration complex subunit RuvB (352 aa).

Residues 5–191 (TDDFSEQRII…FGIVARLEFY (187 aa)) form a large ATPase domain (RuvB-L) region. Residues Leu30, Arg31, Gly72, Lys75, Thr76, Thr77, 138-140 (EDY), Arg181, Tyr191, and Arg228 contribute to the ATP site. Thr76 provides a ligand contact to Mg(2+). Residues 192-262 (TPLELTKIVT…MADAALVMLD (71 aa)) form a small ATPAse domain (RuvB-S) region. A head domain (RuvB-H) region spans residues 265–352 (PVGFDLMDRK…GPNGDLWAGQ (88 aa)). The DNA site is built by Arg301, Arg320, and Arg325.

Belongs to the RuvB family. In terms of assembly, homohexamer. Forms an RuvA(8)-RuvB(12)-Holliday junction (HJ) complex. HJ DNA is sandwiched between 2 RuvA tetramers; dsDNA enters through RuvA and exits via RuvB. An RuvB hexamer assembles on each DNA strand where it exits the tetramer. Each RuvB hexamer is contacted by two RuvA subunits (via domain III) on 2 adjacent RuvB subunits; this complex drives branch migration. In the full resolvosome a probable DNA-RuvA(4)-RuvB(12)-RuvC(2) complex forms which resolves the HJ.

The protein resides in the cytoplasm. It carries out the reaction ATP + H2O = ADP + phosphate + H(+). Functionally, the RuvA-RuvB-RuvC complex processes Holliday junction (HJ) DNA during genetic recombination and DNA repair, while the RuvA-RuvB complex plays an important role in the rescue of blocked DNA replication forks via replication fork reversal (RFR). RuvA specifically binds to HJ cruciform DNA, conferring on it an open structure. The RuvB hexamer acts as an ATP-dependent pump, pulling dsDNA into and through the RuvAB complex. RuvB forms 2 homohexamers on either side of HJ DNA bound by 1 or 2 RuvA tetramers; 4 subunits per hexamer contact DNA at a time. Coordinated motions by a converter formed by DNA-disengaged RuvB subunits stimulates ATP hydrolysis and nucleotide exchange. Immobilization of the converter enables RuvB to convert the ATP-contained energy into a lever motion, pulling 2 nucleotides of DNA out of the RuvA tetramer per ATP hydrolyzed, thus driving DNA branch migration. The RuvB motors rotate together with the DNA substrate, which together with the progressing nucleotide cycle form the mechanistic basis for DNA recombination by continuous HJ branch migration. Branch migration allows RuvC to scan DNA until it finds its consensus sequence, where it cleaves and resolves cruciform DNA. The sequence is that of Holliday junction branch migration complex subunit RuvB from Janthinobacterium sp. (strain Marseille) (Minibacterium massiliensis).